A 183-amino-acid polypeptide reads, in one-letter code: NEDD8-conjugating enzyme Ubc12 (183 aa).

Met-1 bears the N-acetylmethionine mark. Residues 1 to 29 are disordered; that stretch reads MIKLFSLKQQKKEEESAGGTKGSSKKASA. The interval 1–57 is interaction with UBA3; sequence MIKLFSLKQQKKEEESAGGTKGSSKKASAAQLRIQKDINELNLPKTCDISFSDPDDL. An N6-acetyllysine modification is found at Lys-3. The region spanning 29–173 is the UBC core domain; that stretch reads AAQLRIQKDI…VQRSMRGGYI (145 aa). Phosphoserine is present on Ser-50. Catalysis depends on Cys-111, which acts as the Glycyl thioester intermediate. Position 169 is an asymmetric dimethylarginine; alternate (Arg-169). An Omega-N-methylarginine; alternate modification is found at Arg-169.

It belongs to the ubiquitin-conjugating enzyme family. UBC12 subfamily. In terms of assembly, interacts with UBA3 and RBX1. Interacts (N-terminally acetylated form) with (via DCUN1 domain) DCUN1D1, DCUN1D2, DCUN1D3, DCUN1D4 and DCUN1D5. Post-translationally, the acetylation of Met-1 increases affinity for DCUN1D1 by about 2 orders of magnitude and is crucial for NEDD8 transfer to cullins.

The enzyme catalyses [E1 NEDD8-activating enzyme]-S-[NEDD8 protein]-yl-L-cysteine + [E2 NEDD8-conjugating enzyme]-L-cysteine = [E1 NEDD8-activating enzyme]-L-cysteine + [E2 NEDD8-conjugating enzyme]-S-[NEDD8-protein]-yl-L-cysteine.. It participates in protein modification; protein neddylation. Accepts the ubiquitin-like protein NEDD8 from the UBA3-NAE1 E1 complex and catalyzes its covalent attachment to other proteins. The specific interaction with the E3 ubiquitin ligase RBX1, but not RBX2, suggests that the RBX1-UBE2M complex neddylates specific target proteins, such as CUL1, CUL2, CUL3 and CUL4. Involved in cell proliferation. The protein is NEDD8-conjugating enzyme Ubc12 (Ube2m) of Mus musculus (Mouse).